Consider the following 48-residue polypeptide: Fimbrial assembly protein, serogroup A1 (48 aa).

This Dichelobacter nodosus (Bacteroides nodosus) protein is Fimbrial assembly protein, serogroup A1 (fimB).